An 818-amino-acid chain; its full sequence is Actin filament-associated protein 1-like 2 (818 aa).

Position 56 is a phosphotyrosine (Tyr-56). The tract at residues 66 to 163 is disordered; that stretch reads QNAESQGKAP…SKGKSAPYQW (98 aa). Residues 85 to 94 are compositionally biased toward polar residues; sequence EPSQHSSAPQ. Over residues 123 to 139 the composition is skewed to acidic residues; the sequence is YYEEAEPYDTSLNEDGE. 2 PH domains span residues 175–271 and 353–447; these read DARI…EVSG and SLET…SESG. Ser-408 is modified (phosphoserine). Tyr-413 is modified (phosphotyrosine). Ser-484 bears the Phosphoserine mark. Residues 513 to 532 form a disordered region; the sequence is AAVEPTEEATPVADDPNERE. Positions 652–749 form a coiled coil; the sequence is AEIKLGKNRT…VKDNLKKAEA (98 aa). The disordered stretch occupies residues 765–787; sequence NVSPRPKAVTPASAPDCTPVNSA.

In terms of assembly, interacts with SRC. Interacts with LCK when tyrosine phosphorylated. Post-translationally, tyrosine phosphorylated (by SRC). As to expression, detected in spleen and thyroid, and at lower levels in kidney, brain, lung and pancreas.

The protein localises to the cytoplasm. Its function is as follows. May play a role in a signaling cascade by enhancing the kinase activity of SRC. Contributes to SRC-regulated transcription activation. The chain is Actin filament-associated protein 1-like 2 (AFAP1L2) from Homo sapiens (Human).